The primary structure comprises 186 residues: Cytochrome b6-f complex iron-sulfur subunit (186 aa).

Residues 16-38 traverse the membrane as a helical segment; it reads LLSFVTGGAIAATTAATLYPVVL. Positions 74 to 163 constitute a Rieske domain; the sequence is GEPVLTLGLD…ATVSDDKVLI (90 aa). [2Fe-2S] cluster contacts are provided by Cys-109, His-111, Cys-127, and His-130. Cys-114 and Cys-129 are oxidised to a cystine.

The protein belongs to the Rieske iron-sulfur protein family. In terms of assembly, the 4 large subunits of the cytochrome b6-f complex are cytochrome b6, subunit IV (17 kDa polypeptide, PetD), cytochrome f and the Rieske protein, while the 4 small subunits are PetG, PetL, PetM and PetN. The complex functions as a dimer. The cofactor is [2Fe-2S] cluster.

It is found in the cell inner membrane. The catalysed reaction is 2 oxidized [plastocyanin] + a plastoquinol + 2 H(+)(in) = 2 reduced [plastocyanin] + a plastoquinone + 4 H(+)(out). Its function is as follows. Component of the cytochrome b6-f complex, which mediates electron transfer between photosystem II (PSII) and photosystem I (PSI), cyclic electron flow around PSI, and state transitions. The polypeptide is Cytochrome b6-f complex iron-sulfur subunit (Gloeobacter violaceus (strain ATCC 29082 / PCC 7421)).